The chain runs to 279 residues: Pantothenate synthetase (279 aa).

Residue 31–38 (MGNLHGGH) coordinates ATP. His-38 serves as the catalytic Proton donor. Gln-62 serves as a coordination point for (R)-pantoate. Gln-62 provides a ligand contact to beta-alanine. 150-153 (GRKD) contributes to the ATP binding site. Gln-156 contributes to the (R)-pantoate binding site. ATP contacts are provided by residues Val-179 and 187–190 (KSSR).

The protein belongs to the pantothenate synthetase family. As to quaternary structure, homodimer.

Its subcellular location is the cytoplasm. It carries out the reaction (R)-pantoate + beta-alanine + ATP = (R)-pantothenate + AMP + diphosphate + H(+). It participates in cofactor biosynthesis; (R)-pantothenate biosynthesis; (R)-pantothenate from (R)-pantoate and beta-alanine: step 1/1. Catalyzes the condensation of pantoate with beta-alanine in an ATP-dependent reaction via a pantoyl-adenylate intermediate. The protein is Pantothenate synthetase of Stenotrophomonas maltophilia (strain K279a).